The sequence spans 196 residues: Transmembrane protein 126A (196 aa).

Residues 1–34 (MESHKPSTNKDDLIFNIIPRKIKQLPESDRNLLE) lie on the Mitochondrial matrix side of the membrane. A helical membrane pass occupies residues 35-55 (YGSAYIGLNAAFGGLIANSLF). Residues 56 to 57 (RR) are Mitochondrial intermembrane-facing. The helical transmembrane segment at 58–78 (ILNVTQARVASSLPMAVIPFL) threads the bilayer. The Mitochondrial matrix segment spans residues 79-106 (TANLSYHSFVSLPLSTGNLNCEICTTTR). Residues 107-127 (GTLVGFVLGGLYPILLAIPVN) traverse the membrane as a helical segment. At 128–159 (GGLAARYESSPLPQRGNIFNYWITISKPVFRK) the chain is on the mitochondrial intermembrane side. A helical membrane pass occupies residues 160 to 176 (MLFPTLLQTAFAAYLGS). Over 177-196 (RQYKLLIKALQLPEPDLEIQ) the chain is Mitochondrial matrix.

It belongs to the TMEM126 family. As to quaternary structure, interacts with OXA1L; promoting cotranslational quality control in mitochondria.

It is found in the mitochondrion inner membrane. Its function is as follows. Protein required for the cotranslational protein quality control in the inner membrane of the mitochondria. Associates with newly synthesized polypeptides and may act as a chaperone that cooperates with OXA1L for the insertion of newly synthesized mitochondrial proteins into the inner membrane. Required for the assembly of the ND4 module of mitochondrial complex I. The protein is Transmembrane protein 126A (Tmem126a) of Rattus norvegicus (Rat).